The primary structure comprises 421 residues: Ribosomal RNA large subunit methyltransferase G (421 aa).

A disordered region spans residues 389–421 (EPELEQESDLNSKLDANTEVPHPQSALYGKPKA).

It belongs to the methyltransferase superfamily. RlmG family.

The protein resides in the cytoplasm. It carries out the reaction guanosine(1835) in 23S rRNA + S-adenosyl-L-methionine = N(2)-methylguanosine(1835) in 23S rRNA + S-adenosyl-L-homocysteine + H(+). Its function is as follows. Specifically methylates the guanine in position 1835 (m2G1835) of 23S rRNA. This is Ribosomal RNA large subunit methyltransferase G from Shewanella halifaxensis (strain HAW-EB4).